Here is an 89-residue protein sequence, read N- to C-terminus: Small ribosomal subunit protein uS15 (89 aa).

Belongs to the universal ribosomal protein uS15 family. Part of the 30S ribosomal subunit. Forms a bridge to the 50S subunit in the 70S ribosome, contacting the 23S rRNA.

In terms of biological role, one of the primary rRNA binding proteins, it binds directly to 16S rRNA where it helps nucleate assembly of the platform of the 30S subunit by binding and bridging several RNA helices of the 16S rRNA. Its function is as follows. Forms an intersubunit bridge (bridge B4) with the 23S rRNA of the 50S subunit in the ribosome. This chain is Small ribosomal subunit protein uS15, found in Mycobacterium bovis (strain ATCC BAA-935 / AF2122/97).